The chain runs to 330 residues: MKTAYIAKQRQISFVKSHFSRQLEERLGLIEVQAPILSRVGDGTQDNLSGCEKAVQVKVKALPDAQFEVVHSLAKWKRQTLGQHDFSAGEGLYTHMKALRPDEDRLSPLHSVYVDQWDWERVMGDGERQFSTLKSTVEAIWAGIKATEAEVHKQFGLAPFLPEQIQFVHSQELLSRYPDLDAKGRERAIAKELGAVFLVGIGGKLSDGHRHDVRAPDYDDWSSASELGYAGLNGDILVWNPVLEDAFELSSMGIRVDADTLMRQLALTGDEDRLQLEWHQALLRGEMPQTIGGGIGQSRLTMLLLQLPHIGQVQCGVWPAQVRESIPAIL.

Belongs to the class-II aminoacyl-tRNA synthetase family. AsnA subfamily.

Its subcellular location is the cytoplasm. The enzyme catalyses L-aspartate + NH4(+) + ATP = L-asparagine + AMP + diphosphate + H(+). It participates in amino-acid biosynthesis; L-asparagine biosynthesis; L-asparagine from L-aspartate (ammonia route): step 1/1. In Salmonella schwarzengrund (strain CVM19633), this protein is Aspartate--ammonia ligase.